The following is a 566-amino-acid chain: Folate-like transporter DDB_G0272544 (566 aa).

Residues 24–81 are a coiled coil; it reads RNQDEDENENENNDNLENDNNKRNYISINNYEPYKEIDNNNNKNNNNNNIINNNNKIN. A disordered region spans residues 25–46; that stretch reads NQDEDENENENNDNLENDNNKR. The span at 27-40 shows a compositional bias: acidic residues; it reads DEDENENENNDNLE. The next 11 membrane-spanning stretches (helical) occupy residues 148 to 168, 171 to 191, 194 to 214, 226 to 246, 252 to 272, 304 to 324, 332 to 352, 364 to 384, 388 to 408, 420 to 440, and 458 to 478; these read VFLL…IIII, VAKI…WMIL, ITEG…YFSL, VNAG…LLVE, VYLL…ALGF, IWSG…QNLF, SWNG…AIIP, GIIL…MGFG, VVSA…SPIV, IGVL…LVQS, and YGAC…FLFL. Residues 517 to 544 adopt a coiled-coil conformation; the sequence is YNANIIDFENNNNNNNNNNNNNNNNNNN. The segment covering 526 to 556 has biased composition (low complexity); that stretch reads NNNNNNNNNNNNNNNNNNNNNNNNNNNNNNN. The tract at residues 526 to 566 is disordered; the sequence is NNNNNNNNNNNNNNNNNNNNNNNNNNNNNNNVGIGGNDNFK.

It belongs to the reduced folate carrier (RFC) transporter (TC 2.A.48) family.

It localises to the membrane. Folate transporter. The protein is Folate-like transporter DDB_G0272544 of Dictyostelium discoideum (Social amoeba).